The primary structure comprises 686 residues: Thymidine kinase (686 aa).

A compositionally biased stretch (polar residues) spans 1–14 (MASNSHNNYNTPRR). Disordered stretches follow at residues 1–21 (MASN…DVPK) and 64–85 (NPGL…PSSD). 243–250 (GCMAAGKT) is a binding site for ATP. The active-site Proton acceptor is E270. Q308 serves as a coordination point for substrate. R398 is a binding site for ATP. R404 is a binding site for substrate.

This sequence belongs to the herpesviridae thymidine kinase family. As to quaternary structure, homodimer.

The catalysed reaction is thymidine + ATP = dTMP + ADP + H(+). Catalyzes the transfer of the gamma-phospho group of ATP to thymidine to generate dTMP in the salvage pathway of pyrimidine synthesis. The dTMP serves as a substrate for DNA polymerase during viral DNA replication. Allows the virus to be reactivated and to grow in non-proliferative cells lacking a high concentration of phosphorylated nucleic acid precursors. The protein is Thymidine kinase of Alcelaphine herpesvirus 1 (strain WC11) (AlHV-1).